Consider the following 349-residue polypeptide: Protein-glutamate methylesterase/protein-glutamine glutaminase 3 (349 aa).

The 118-residue stretch at 2-119 folds into the Response regulatory domain; sequence DVLIVDDSPV…HPDFERDVES (118 aa). Asp-52 is subject to 4-aspartylphosphate. One can recognise a CheB-type methylesterase domain in the interval 157-340; sequence EGFQPGVIAI…LSPPRIAALL (184 aa). Catalysis depends on residues Ser-169, His-196, and Asp-289.

Belongs to the CheB family. In terms of processing, phosphorylated by CheA. Phosphorylation of the N-terminal regulatory domain activates the methylesterase activity.

It localises to the cytoplasm. The catalysed reaction is [protein]-L-glutamate 5-O-methyl ester + H2O = L-glutamyl-[protein] + methanol + H(+). It carries out the reaction L-glutaminyl-[protein] + H2O = L-glutamyl-[protein] + NH4(+). Functionally, involved in chemotaxis. Part of a chemotaxis signal transduction system that modulates chemotaxis in response to various stimuli. Catalyzes the demethylation of specific methylglutamate residues introduced into the chemoreceptors (methyl-accepting chemotaxis proteins or MCP) by CheR. Also mediates the irreversible deamidation of specific glutamine residues to glutamic acid. In Hahella chejuensis (strain KCTC 2396), this protein is Protein-glutamate methylesterase/protein-glutamine glutaminase 3.